Reading from the N-terminus, the 172-residue chain is CD164 sialomucin-like 2 protein (172 aa).

Positions 1–29 (MAAPGPRALRAALCGGCCCLLLCAQLVLA) are cleaved as a signal peptide. Residues 30–137 (GKGARGFGRG…PEDHSPGFDG (108 aa)) are Extracellular-facing. N-linked (GlcNAc...) asparagine glycosylation is found at N69 and N101. Residues 108–132 (ASHHHSTEEPKPSTTGSPPIPEDHS) are disordered. Residues 138-158 (ASFIGGIVLVLSLQATAFFVL) form a helical membrane-spanning segment. Over 159 to 172 (RFLKAKDSTYQTLI) the chain is Cytoplasmic.

Belongs to the CD164 family.

Its subcellular location is the membrane. The chain is CD164 sialomucin-like 2 protein (Cd164l2) from Mus musculus (Mouse).